A 76-amino-acid chain; its full sequence is DNA-directed RNA polymerase subunit epsilon (76 aa).

It belongs to the RNA polymerase subunit epsilon family. As to quaternary structure, RNAP is composed of a core of 2 alpha, a beta and a beta' subunit. The core is associated with a delta subunit, and at least one of epsilon or omega. When a sigma factor is associated with the core the holoenzyme is formed, which can initiate transcription.

The enzyme catalyses RNA(n) + a ribonucleoside 5'-triphosphate = RNA(n+1) + diphosphate. Functionally, a non-essential component of RNA polymerase (RNAP). The sequence is that of DNA-directed RNA polymerase subunit epsilon from Streptococcus pyogenes serotype M1.